The primary structure comprises 284 residues: MQREFVSGAGLGLRRALLEPLGAGDEVRVDFLEVAPENWIGIGGRLGRQFRELTERLPFLCHGLSLNLGGYAPLDMSLLRAIKGFIEQHGIRAYSEHLSACADDGQLYDLMPLPFSDESVRRVAERVRVVQDVLERPLIVENVSAYARLPGELEEVDFVRAVLEEADCQLLLDVNNVYVNACNFGFDAHAYIAAMPSRRIAYLHMAGHDEQGASLKIDTHGAPVCDPVWELLAHAYACHGERPTLLERDFNLPPLSELYAETDRIRELQRRSGEAQLRSLGYGT.

It belongs to the UPF0276 family.

The polypeptide is UPF0276 protein PA14_21580 (Pseudomonas aeruginosa (strain UCBPP-PA14)).